A 96-amino-acid chain; its full sequence is Cytochrome b (96 aa).

Transmembrane regions (helical) follow at residues 1–15 (LCXI…FLAM), 39–60 (WLIR…YLHI), and 75–95 (WNVG…GYVL). Heme b contacts are provided by His45 and His59.

The protein belongs to the cytochrome b family. As to quaternary structure, the cytochrome bc1 complex contains 3 respiratory subunits (MT-CYB, CYC1 and UQCRFS1), 2 core proteins (UQCRC1 and UQCRC2) and probably 6 low-molecular weight proteins. Heme b serves as cofactor.

It localises to the mitochondrion inner membrane. Its function is as follows. Component of the ubiquinol-cytochrome c reductase complex (complex III or cytochrome b-c1 complex) that is part of the mitochondrial respiratory chain. The b-c1 complex mediates electron transfer from ubiquinol to cytochrome c. Contributes to the generation of a proton gradient across the mitochondrial membrane that is then used for ATP synthesis. This Geophagus steindachneri (Red hump earth eater) protein is Cytochrome b (mt-cyb).